Reading from the N-terminus, the 266-residue chain is Type 1 encapsulin shell protein (266 aa).

Belongs to the encapsulin family. Family 1 subfamily. This encapsulin nanocompartment is formed by 60 subunits; monomers form 12 pentamers which assemble to form shells. Shells are loaded with 4 encapsulated ferritin-like protein decamers (EncFtn) in a tetrahedral arrangement. A 3 nm gap is consistently seen between the shell and the cargo.

The protein resides in the encapsulin nanocompartment. In terms of biological role, shell component of a type 1 encapsulin nanocompartment. Assembles into proteinaceous shells about 21 nm in diameter. Small pores form at, or close to, the 2-, 3-, and 5-fold symmetry axes. Data analysis suggests the 5-fold pores open and close with maximal and minimal aperatures of 15 and 5 Angstroms. Cargo protein Fer (ferritin-like protein, probably stores iron) is targeted to the interior via its C-terminal extension; empty intact shells can be isolated in the absence of cargo protein. The protein is Type 1 encapsulin shell protein of Haliangium ochraceum (strain DSM 14365 / JCM 11303 / SMP-2).